Here is a 303-residue protein sequence, read N- to C-terminus: UDP-3-O-acyl-N-acetylglucosamine deacetylase (303 aa).

Zn(2+)-binding residues include histidine 78, histidine 237, and aspartate 241. The Proton donor role is filled by histidine 264.

It belongs to the LpxC family. It depends on Zn(2+) as a cofactor.

It catalyses the reaction a UDP-3-O-[(3R)-3-hydroxyacyl]-N-acetyl-alpha-D-glucosamine + H2O = a UDP-3-O-[(3R)-3-hydroxyacyl]-alpha-D-glucosamine + acetate. Its pathway is glycolipid biosynthesis; lipid IV(A) biosynthesis; lipid IV(A) from (3R)-3-hydroxytetradecanoyl-[acyl-carrier-protein] and UDP-N-acetyl-alpha-D-glucosamine: step 2/6. Functionally, catalyzes the hydrolysis of UDP-3-O-myristoyl-N-acetylglucosamine to form UDP-3-O-myristoylglucosamine and acetate, the committed step in lipid A biosynthesis. In Cellvibrio japonicus (strain Ueda107) (Pseudomonas fluorescens subsp. cellulosa), this protein is UDP-3-O-acyl-N-acetylglucosamine deacetylase.